Here is a 93-residue protein sequence, read N- to C-terminus: YcgL domain-containing protein Spea_2443 (93 aa).

A YcgL domain is found at Met1 to Lys85.

This Shewanella pealeana (strain ATCC 700345 / ANG-SQ1) protein is YcgL domain-containing protein Spea_2443.